The chain runs to 142 residues: Photosystem II extrinsic protein U (142 aa).

The N-terminal stretch at 1 to 28 (MKKIGLLLTIFSLCLGCLGLVPSDKAHA) is a signal peptide.

The protein belongs to the PsbU family. In terms of assembly, PSII is composed of 1 copy each of membrane proteins PsbA, PsbB, PsbC, PsbD, PsbE, PsbF, PsbH, PsbI, PsbJ, PsbK, PsbL, PsbM, PsbT, PsbX, PsbY, PsbZ, Psb30/Ycf12, peripheral proteins PsbO, CyanoQ (PsbQ), PsbU, PsbV and a large number of cofactors. It forms dimeric complexes.

It localises to the cellular thylakoid membrane. Functionally, one of the extrinsic, lumenal subunits of photosystem II (PSII). PSII is a light-driven water plastoquinone oxidoreductase, using light energy to abstract electrons from H(2)O, generating a proton gradient subsequently used for ATP formation. The extrinsic proteins stabilize the structure of photosystem II oxygen-evolving complex (OEC), the ion environment of oxygen evolution and protect the OEC against heat-induced inactivation. This Trichodesmium erythraeum (strain IMS101) protein is Photosystem II extrinsic protein U.